A 143-amino-acid chain; its full sequence is UPF0225 protein Reut_A0143 (143 aa).

It belongs to the UPF0225 family.

The chain is UPF0225 protein Reut_A0143 from Cupriavidus pinatubonensis (strain JMP 134 / LMG 1197) (Cupriavidus necator (strain JMP 134)).